We begin with the raw amino-acid sequence, 298 residues long: Ribosomal protein L11 methyltransferase (298 aa).

T152, G173, D195, and N234 together coordinate S-adenosyl-L-methionine.

This sequence belongs to the methyltransferase superfamily. PrmA family.

It localises to the cytoplasm. It catalyses the reaction L-lysyl-[protein] + 3 S-adenosyl-L-methionine = N(6),N(6),N(6)-trimethyl-L-lysyl-[protein] + 3 S-adenosyl-L-homocysteine + 3 H(+). Its function is as follows. Methylates ribosomal protein L11. This is Ribosomal protein L11 methyltransferase from Ralstonia nicotianae (strain ATCC BAA-1114 / GMI1000) (Ralstonia solanacearum).